Here is a 504-residue protein sequence, read N- to C-terminus: TGF-beta-activated kinase 1 and MAP3K7-binding protein 1 (504 aa).

A disordered region spans residues 1–22; the sequence is MAAQRRSLLQSEQQPSWTDDLP. S7 bears the Phosphoserine mark. The segment covering 7-17 has biased composition (polar residues); the sequence is SLLQSEQQPSW. The 338-residue stretch at 28-365 folds into the PPM-type phosphatase domain; sequence GVGSASNRSY…EDMTLLVRNF (338 aa). Position 378 is a phosphoserine (S378). O-linked (GlcNAc) serine glycosylation is present at S395. S423 carries the phosphoserine; by MAPK14 modification. Residues 430-439 are compositionally biased toward polar residues; sequence ATPTLTNQSP. The segment at 430–478 is disordered; it reads ATPTLTNQSPTLTLQSTNTHTQSSSSSSDGGLFRSRPAHSLPPGEDGRV. T431 is subject to Phosphothreonine; by MAPK14. A Phosphoserine; by MAPK14 modification is found at S438. The span at 440-457 shows a compositional bias: low complexity; that stretch reads TLTLQSTNTHTQSSSSSS. At T442 the chain carries Phosphothreonine.

Interacts with XIAP and BIRC7. Interacts with TRAF6 and MAP3K7; during IL-1 signaling. Identified in the TRIKA2 complex composed of MAP3K7, TAB1 and TAB2. Interacts with TRAF6 and MAPK14; these interactions allow MAPK14 autophosphorylation. Interacts with STING1; interaction takes place following cGAMP activation and promotes TAB1 recruitment to the endoplasmic reticulum, triggering MAP3K7/TAK1 activation and STING1 phosphorylation. In terms of processing, phosphorylated at all three sites Ser-423, Thr-431 and Ser-438 by MAPK14 when cells were exposed to cellular stresses, or stimulated with TNF-alpha, IL1 or LPS. These phosphorylations inhibit TAK1 activation by a feedback control mechanism. Dephosphorylated by DUSP14 at Ser-438, leading to TAB1-MAP3K7/TAK1 complex inactivation in T-cells. Ubiquitinated by MAP3K1 with 'Lys-63'-linked polyubiquitin; leading to activation of TAK1 and of JNK and p38 MAP kinases following EGF and TGF-beta stimulation. Ubiquitinated by ITCH with 'Lys-48'-linked polyubiquitin; leading to proteasomal degradation. Ubiquitinated by RNF114 during maternal-to-zygotic transition; leading to degradation. Post-translationally, (Microbial infection) Deubiquitinated by Y.enterocolitica YopP. In terms of processing, O-GlcNAcylated at Ser-395 by OGT is required for full MAP3K7/TAK1 activation upon stimulation with IL-1 or osmotic stress. Deglycosylated at Ser-395 by OGA. Ubiquitous.

The protein localises to the cytoplasm. It localises to the cytosol. The protein resides in the endoplasmic reticulum membrane. Key adapter protein that plays an essential role in JNK and NF-kappa-B activation and proinflammatory cytokines production in response to stimulation with TLRs and cytokines. Mechanistically, associates with the catalytic domain of MAP3K7/TAK1 to trigger MAP3K7/TAK1 autophosphorylation leading to its full activation. Similarly, associates with MAPK14 and triggers its autophosphorylation and subsequent activation. In turn, MAPK14 phosphorylates TAB1 and inhibits MAP3K7/TAK1 activation in a feedback control mechanism. Also plays a role in recruiting MAPK14 to the TAK1 complex for the phosphorylation of the TAB2 and TAB3 regulatory subunits. The sequence is that of TGF-beta-activated kinase 1 and MAP3K7-binding protein 1 (TAB1) from Homo sapiens (Human).